Here is a 301-residue protein sequence, read N- to C-terminus: Probable alpha-L-glutamate ligase 2 (301 aa).

Residues 104-287 enclose the ATP-grasp domain; the sequence is LQLLSRKGIG…VTEPIVEYIE (184 aa). Residues lysine 141, 178–179, aspartate 187, and 211–213 contribute to the ATP site; these read EY and RSN. Positions 248, 260, and 262 each coordinate Mg(2+). Residues aspartate 248, glutamate 260, and asparagine 262 each contribute to the Mn(2+) site.

The protein belongs to the RimK family. Requires Mg(2+) as cofactor. Mn(2+) serves as cofactor.

In Shewanella baltica (strain OS195), this protein is Probable alpha-L-glutamate ligase 2.